We begin with the raw amino-acid sequence, 283 residues long: MMMGKEDLGLSLSLGFSQNHNPLQMNLNPNSSLSNNLQRLPWNQTFDPTSDLRKIDVNSFPSTVNCEEDTGVSSPNSTISSTISGKRSEREGISGTGVGSGDDHDEITPDRGYSRGTSDEEEDGGETSRKKLRLSKDQSAFLEETFKEHNTLNPKQKLALAKKLNLTARQVEVWFQNRRARTKLKQTEVDCEYLKRCVEKLTEENRRLQKEAMELRTLKLSPQFYGQMTPPTTLIMCPSCERVGGPSSSNHHHNHRPVSINPWVACAGQVAHGLNFEALRPRS.

The interval 64–134 is disordered; that stretch reads VNCEEDTGVS…GETSRKKLRL (71 aa). A compositionally biased stretch (low complexity) spans 73-84; that stretch reads SSPNSTISSTIS. Positions 127 to 186 form a DNA-binding region, homeobox; that stretch reads TSRKKLRLSKDQSAFLEETFKEHNTLNPKQKLALAKKLNLTARQVEVWFQNRRARTKLKQ. The interval 194-215 is leucine-zipper; sequence LKRCVEKLTEENRRLQKEAMEL.

This sequence belongs to the HD-ZIP homeobox family. Class II subfamily. Interacts with RBR1.

It localises to the nucleus. In terms of biological role, probable transcription factor that plays a role in auxin-mediated morphogenesis. Negatively regulates lateral root elongation. The sequence is that of Homeobox-leucine zipper protein HAT2 (HAT2) from Arabidopsis thaliana (Mouse-ear cress).